We begin with the raw amino-acid sequence, 245 residues long: Triosephosphate isomerase (245 aa).

4 to 6 (NWK) contributes to the substrate binding site. The Electrophile role is filled by His-91. Glu-161 (proton acceptor) is an active-site residue. Substrate-binding positions include Gly-167, Ser-207, and 228–229 (GG).

Belongs to the triosephosphate isomerase family. Homodimer.

It is found in the cytoplasm. It catalyses the reaction D-glyceraldehyde 3-phosphate = dihydroxyacetone phosphate. Its pathway is carbohydrate biosynthesis; gluconeogenesis. The protein operates within carbohydrate degradation; glycolysis; D-glyceraldehyde 3-phosphate from glycerone phosphate: step 1/1. Functionally, involved in the gluconeogenesis. Catalyzes stereospecifically the conversion of dihydroxyacetone phosphate (DHAP) to D-glyceraldehyde-3-phosphate (G3P). The sequence is that of Triosephosphate isomerase from Chlorobaculum tepidum (strain ATCC 49652 / DSM 12025 / NBRC 103806 / TLS) (Chlorobium tepidum).